A 651-amino-acid polypeptide reads, in one-letter code: Intraflagellar transport protein 70A (651 aa).

TPR repeat units follow at residues 8 to 41 (DGEY…HTKS), 42 to 75 (RAAL…HPEV), 140 to 173 (PDYD…LGYQ), 175 to 207 (DLAY…GIRE), 379 to 410 (VTKQ…EKYI), 411 to 443 (PVLM…CNEH), and 445 to 478 (TWKL…HYEN). Residues 494-521 (YIMTSQNEEAEELMRKIEKEEEQISYDD) adopt a coiled-coil conformation. A TPR 8 repeat occupies 530–563 (CIVNLVIGTLYCAKGNYDFGISRVIKSLEPYNKK).

The protein belongs to the TTC30/dfy-1/fleer family. In terms of tissue distribution, localizes to the cilia of many ciliated epithelial cell types including pronephric cells, olfactory placode, the brain ventricle and lateral line organs.

The protein localises to the cell projection. The protein resides in the cilium. Plays a role in anterograde intraflagellar transport (IFT), the process by which cilia precursors are transported from the base of the cilium to the site of their incorporation at the tip. Required for polyglutamylation of axonemal tubulin, which is a prerequisite for correct assembly of cilia and for normal cilia beat amplitude. Does not seem to be required for neuronal microtubule polyglutamylation. The polypeptide is Intraflagellar transport protein 70A (ift70a) (Danio rerio (Zebrafish)).